The following is a 258-amino-acid chain: Synapse differentiation-inducing gene protein 1 (258 aa).

At 1–181 (MDGIVEQKSV…NFLMMPPRDH (181 aa)) the chain is on the cytoplasmic side. Ser137 is modified (phosphoserine). Residues 182 to 202 (LGLSVFSMLCCFWPLGIAAFY) form a helical membrane-spanning segment. Residues 203–228 (LSHETNKAVAKGDFHQASTSSRRALF) are Extracellular-facing. Residues 229–249 (LAVLSITIGTGIYVGVAVALI) constitute an intramembrane region (helical). Over 250–258 (AYLSKNNHL) the chain is Extracellular.

This sequence belongs to the CD225/Dispanin family. As to quaternary structure, homodimer. Interacts with GRIA1 and GRIA2. As to expression, enriched in the cerebellum and also expressed in the neocortex and modestly in the hippocampus (at protein level). Expressed in hippocampal neurons, both in cell body and neurites, however its presence is enriched at excitatory synapses and also found in postsynaptic cells.

It is found in the cell membrane. Its subcellular location is the early endosome membrane. The protein resides in the postsynaptic density membrane. The protein localises to the synapse. It localises to the cell projection. It is found in the dendrite. Its subcellular location is the dendritic spine. Its function is as follows. May regulate AMPA receptor content at nascent synapses, and have a role in postsynaptic development and maturation. The sequence is that of Synapse differentiation-inducing gene protein 1 (Syndig1) from Rattus norvegicus (Rat).